The primary structure comprises 240 residues: 2,3-bisphosphoglycerate-dependent phosphoglycerate mutase 2 (240 aa).

Residues 8-15, 21-22, Arg-60, 87-90, Lys-98, 114-115, and 183-184 contribute to the substrate site; these read RHGQSEWN, TG, ERHY, RR, and GN. The Tele-phosphohistidine intermediate role is filled by His-9. The active-site Proton donor/acceptor is Glu-87.

Belongs to the phosphoglycerate mutase family. BPG-dependent PGAM subfamily.

It catalyses the reaction (2R)-2-phosphoglycerate = (2R)-3-phosphoglycerate. It functions in the pathway carbohydrate degradation; glycolysis; pyruvate from D-glyceraldehyde 3-phosphate: step 3/5. Catalyzes the interconversion of 2-phosphoglycerate and 3-phosphoglycerate. This is 2,3-bisphosphoglycerate-dependent phosphoglycerate mutase 2 from Bacillus cereus (strain ATCC 10987 / NRS 248).